Reading from the N-terminus, the 477-residue chain is Nuclear receptor subfamily 6 group A member 1-A (477 aa).

The nuclear receptor DNA-binding region spans glutamine 40–glutamate 115. 2 NR C4-type zinc fingers span residues cysteine 43–cysteine 63 and cysteine 79–cysteine 98. Residues aspartate 147 to arginine 187 are disordered. Over residues tryptophan 156–arginine 187 the composition is skewed to polar residues. Positions glutamine 230–tyrosine 461 constitute an NR LBD domain.

The protein belongs to the nuclear hormone receptor family. NR6 subfamily. As to quaternary structure, homodimer. As to expression, expressed in germ cells, being predominant in previtellogenic oocytes in the ovary and in spermatocytes in the testis.

The protein localises to the nucleus. Probable orphan nuclear receptor. Binds to a response element containing repeats of the motif 5'-AGGTCA-3'. This Danio rerio (Zebrafish) protein is Nuclear receptor subfamily 6 group A member 1-A.